A 154-amino-acid chain; its full sequence is Iron-sulfur cluster assembly enzyme IscU (154 aa).

It belongs to the NifU family. As to quaternary structure, component of the mitochondrial core iron-sulfur cluster (ISC) assembly complex at least composed of the cystein desulfurase Nfs1, the scaffold protein IscU, the accessory protein bcn92/Isd11/Lyrm4, and probably fh/frataxin. Interacts with Nfs1. The cofactor is Fe(2+). [2Fe-2S] cluster serves as cofactor.

It participates in cofactor biosynthesis; iron-sulfur cluster biosynthesis. Scaffold protein for the de novo synthesis of iron-sulfur (Fe-S) clusters within mitochondria, which is required for maturation of both mitochondrial and cytoplasmic [2Fe-2S] and [4Fe-4S] proteins. Component of the mitochondrial core iron-sulfur cluster (ISC) assembly complex; regulates its activity. The chain is Iron-sulfur cluster assembly enzyme IscU from Drosophila melanogaster (Fruit fly).